The chain runs to 327 residues: DNA-directed RNA polymerase subunit alpha (327 aa).

The interval 1–233 (MVREKVKVST…NLFIPFLHVE (233 aa)) is alpha N-terminal domain (alpha-NTD). The interval 267–327 (LAFQYIFIDQ…KKILDILEKK (61 aa)) is alpha C-terminal domain (alpha-CTD).

This sequence belongs to the RNA polymerase alpha chain family. In terms of assembly, in plastids the minimal PEP RNA polymerase catalytic core is composed of four subunits: alpha, beta, beta', and beta''. When a (nuclear-encoded) sigma factor is associated with the core the holoenzyme is formed, which can initiate transcription.

It localises to the plastid. The protein localises to the chloroplast. The catalysed reaction is RNA(n) + a ribonucleoside 5'-triphosphate = RNA(n+1) + diphosphate. DNA-dependent RNA polymerase catalyzes the transcription of DNA into RNA using the four ribonucleoside triphosphates as substrates. The sequence is that of DNA-directed RNA polymerase subunit alpha from Draba nemorosa (Woodland whitlowgrass).